Reading from the N-terminus, the 40-residue chain is Photosystem II reaction center protein J (40 aa).

A helical membrane pass occupies residues 8–28 (IPLWLVGTVAGILVIGLIGIF).

Belongs to the PsbJ family. PSII is composed of 1 copy each of membrane proteins PsbA, PsbB, PsbC, PsbD, PsbE, PsbF, PsbH, PsbI, PsbJ, PsbK, PsbL, PsbM, PsbT, PsbX, PsbY, PsbZ, Psb30/Ycf12, at least 3 peripheral proteins of the oxygen-evolving complex and a large number of cofactors. It forms dimeric complexes.

The protein resides in the plastid. It is found in the chloroplast thylakoid membrane. Its function is as follows. One of the components of the core complex of photosystem II (PSII). PSII is a light-driven water:plastoquinone oxidoreductase that uses light energy to abstract electrons from H(2)O, generating O(2) and a proton gradient subsequently used for ATP formation. It consists of a core antenna complex that captures photons, and an electron transfer chain that converts photonic excitation into a charge separation. In Gnetum parvifolium (Small-leaved jointfir), this protein is Photosystem II reaction center protein J.